The chain runs to 268 residues: 4-diphosphocytidyl-2-C-methyl-D-erythritol kinase (268 aa).

The active site involves lysine 10. Residue 101-111 participates in ATP binding; it reads PTQAGLGGGST. Aspartate 143 is a catalytic residue.

The protein belongs to the GHMP kinase family. IspE subfamily.

The enzyme catalyses 4-CDP-2-C-methyl-D-erythritol + ATP = 4-CDP-2-C-methyl-D-erythritol 2-phosphate + ADP + H(+). Its pathway is isoprenoid biosynthesis; isopentenyl diphosphate biosynthesis via DXP pathway; isopentenyl diphosphate from 1-deoxy-D-xylulose 5-phosphate: step 3/6. In terms of biological role, catalyzes the phosphorylation of the position 2 hydroxy group of 4-diphosphocytidyl-2C-methyl-D-erythritol. In Helicobacter acinonychis (strain Sheeba), this protein is 4-diphosphocytidyl-2-C-methyl-D-erythritol kinase.